A 363-amino-acid chain; its full sequence is Aminomethyltransferase (363 aa).

Belongs to the GcvT family. In terms of assembly, the glycine cleavage system is composed of four proteins: P, T, L and H.

The catalysed reaction is N(6)-[(R)-S(8)-aminomethyldihydrolipoyl]-L-lysyl-[protein] + (6S)-5,6,7,8-tetrahydrofolate = N(6)-[(R)-dihydrolipoyl]-L-lysyl-[protein] + (6R)-5,10-methylene-5,6,7,8-tetrahydrofolate + NH4(+). In terms of biological role, the glycine cleavage system catalyzes the degradation of glycine. In Dechloromonas aromatica (strain RCB), this protein is Aminomethyltransferase.